The chain runs to 469 residues: MNPNQKIITIGSVSLTIATICFLMQIAILVTTVTLHFKQYECSSPPNNQVMPCEPIIIERNITEIVYLTNTTIEKEICPKLVEYRNWSKPQCKITGFAPFSKDNSIRLSAGGDIWVTREPYVSCDPGKCYQFALGQGTTLNNKHSNDTIHDRTPYRTLLMNELGVPFHLGTKQVCIAWSSSSCHDGKAWLHVCVTGHDKNATASFIYDGRLVDSIGSWSKNILRTQESECVCINGTCTVVMTDGSASERADTKILFIEEGKIVHISPLSGSAQHVEECSCYPRYPGVRCVCRDNWKGSNRPIVDINVKDYSIVSSYVCSGLVGDTPRKNDRSSSSYCRNPNNEKGNHGVKGWAFDDGNDVWMGRTIGEELRSGYETFKVIGGWSTPNSKLQINRQVIVDSDNRSGYSGIFSVEGKSCINRCFYVELIRGREQETRVWWTSNSIVVFCGTSGTYGTGSWPDGADINLMPI.

The Intravirion segment spans residues 1–9; it reads MNPNQKIIT. A helical transmembrane segment spans residues 10–30; that stretch reads IGSVSLTIATICFLMQIAILV. An involved in apical transport and lipid raft association region spans residues 11 to 33; the sequence is GSVSLTIATICFLMQIAILVTTV. Residues 31-469 lie on the Virion surface side of the membrane; the sequence is TTVTLHFKQY…DGADINLMPI (439 aa). The hypervariable stalk region stretch occupies residues 36 to 88; the sequence is HFKQYECSSPPNNQVMPCEPIIIERNITEIVYLTNTTIEKEICPKLVEYRNWS. N-linked (GlcNAc...) asparagine; by host glycosylation is found at N61, N70, and N86. The segment at 91–469 is head of neuraminidase; that stretch reads QCKITGFAPF…DGADINLMPI (379 aa). Cystine bridges form between C92–C417, C124–C129, C183–C230, C232–C237, C278–C291, C280–C289, C318–C337, and C421–C447. R118 lines the substrate pocket. N-linked (GlcNAc...) asparagine; by host glycosylation occurs at N146. D151 (proton donor/acceptor) is an active-site residue. Residue R152 participates in substrate binding. N-linked (GlcNAc...) asparagine; by host glycans are attached at residues N200 and N234. 276–277 contacts substrate; sequence EE. Position 292 (R292) interacts with substrate. Positions 293, 297, and 324 each coordinate Ca(2+). Position 371 (R371) interacts with substrate. Residue N402 is glycosylated (N-linked (GlcNAc...) asparagine; by host). Residue Y406 is the Nucleophile of the active site.

This sequence belongs to the glycosyl hydrolase 34 family. Homotetramer. It depends on Ca(2+) as a cofactor. In terms of processing, N-glycosylated.

The protein resides in the virion membrane. It localises to the host apical cell membrane. The enzyme catalyses Hydrolysis of alpha-(2-&gt;3)-, alpha-(2-&gt;6)-, alpha-(2-&gt;8)- glycosidic linkages of terminal sialic acid residues in oligosaccharides, glycoproteins, glycolipids, colominic acid and synthetic substrates.. Its activity is regulated as follows. Inhibited by the neuraminidase inhibitors zanamivir (Relenza) and oseltamivir (Tamiflu). These drugs interfere with the release of progeny virus from infected cells and are effective against all influenza strains. Resistance to neuraminidase inhibitors is quite rare. Functionally, catalyzes the removal of terminal sialic acid residues from viral and cellular glycoconjugates. Cleaves off the terminal sialic acids on the glycosylated HA during virus budding to facilitate virus release. Additionally helps virus spread through the circulation by further removing sialic acids from the cell surface. These cleavages prevent self-aggregation and ensure the efficient spread of the progeny virus from cell to cell. Otherwise, infection would be limited to one round of replication. Described as a receptor-destroying enzyme because it cleaves a terminal sialic acid from the cellular receptors. May facilitate viral invasion of the upper airways by cleaving the sialic acid moieties on the mucin of the airway epithelial cells. Likely to plays a role in the budding process through its association with lipid rafts during intracellular transport. May additionally display a raft-association independent effect on budding. Plays a role in the determination of host range restriction on replication and virulence. Sialidase activity in late endosome/lysosome traffic seems to enhance virus replication. In Influenza A virus (strain A/Hong Kong/5/1983 H3N2), this protein is Neuraminidase.